A 356-amino-acid chain; its full sequence is Heparan sulfate 2-O-sulfotransferase 1 (356 aa).

Residues 1–11 (MGLLRIMMPPK) lie on the Cytoplasmic side of the membrane. Residues 12 to 28 (LQLLAVVAFAVAMLFLE) form a helical; Signal-anchor for type II membrane protein membrane-spanning segment. Residues 24 to 51 (MLFLENQIQKLEESRAKLERAIARHEVR) are a coiled coil. The Lumenal segment spans residues 29-356 (NQIQKLEESR…FYEKIYPKSN (328 aa)). The adenosine 3',5'-bisphosphate site is built by Lys83, Thr84, Ala85, Ser86, Thr87, and Ser88. 2 N-linked (GlcNAc...) asparagine glycosylation sites follow: Asn108 and Asn127. Active-site residues include His140 and His142. 2 residues coordinate adenosine 3',5'-bisphosphate: Arg164 and Ser172. 2 disulfide bridges follow: Cys201-Cys209 and Cys222-Cys228. The adenosine 3',5'-bisphosphate site is built by Tyr279, Ser285, Thr290, and Lys293.

Belongs to the sulfotransferase 3 family. In terms of assembly, homotrimer. Interacts with the C5-epimerase GLCE. N-glycosylated. Widely expressed. Expressed at higher level in lung and brain. Weakly expressed in spleen.

It localises to the golgi apparatus membrane. Its function is as follows. Catalyzes the transfer of a sulfo group from 3'-phospho-5'-adenylyl sulfate (PAPS) to the 2-OH position of iduronic acid (IdoA) or glucuronic acid (GlcA) within the heparan sulfate (HS) chain and participates in HS biosynthesis. Required for metanephric development of kidney formation, suggesting that 2-O-sulfation within HS is essential for signaling between ureteric bud and metanephric mesenchyme. This Mus musculus (Mouse) protein is Heparan sulfate 2-O-sulfotransferase 1.